Reading from the N-terminus, the 1909-residue chain is Plexin-B3 (1909 aa).

The first 44 residues, 1–44 (MCHAAQETPLLHHFMAPVMARWPPFGLCLLLLLLSPPPLPLTGA), serve as a signal peptide directing secretion. The region spanning 45–471 (HRFSAPNTTL…TAHQVDRIPV (427 aa)) is the Sema domain. Residues 45–1255 (HRFSAPNTTL…PLSAFPVEAQ (1211 aa)) are Extracellular-facing. N51 carries an N-linked (GlcNAc...) asparagine glycan. 2 disulfides stabilise this stretch: C98-C107 and C132-C140. N231 carries an N-linked (GlcNAc...) asparagine glycan. 8 disulfide bridges follow: C267/C370, C283/C315, C333/C357, C474/C491, C480/C525, C483/C500, C494/C506, and C562/C580. In terms of domain architecture, PSI 1 spans 473-526 (ACPQFPDCASCLQAQDPLCGWCVLQGRCTRKGQCGRAGQLNQWLWSYEEDSHCL). The N-linked (GlcNAc...) asparagine glycan is linked to N615. 2 PSI domains span residues 620–682 (DCSA…GACP) and 787–833 (DCAM…LLCP). N802, N900, N957, N1101, and N1218 each carry an N-linked (GlcNAc...) asparagine glycan. IPT/TIG domains lie at 835-925 (PSID…FTYQ), 927-1012 (PVLL…FRYT), 1015-1145 (PQLV…FLYQ), and 1159-1244 (ARPY…YEAE). A helical membrane pass occupies residues 1256–1276 (AGVGMGAAVLIAAVLLLTLMY). Residues 1277–1909 (RHKSKQALRD…ALVENKVTDL (633 aa)) lie on the Cytoplasmic side of the membrane.

Belongs to the plexin family. Interacts (via cytoplasmic domain) with RAC1 and ARHGDIA. Binds MET and MST1R. Interacts (via cytoplasmic domain) with FSCN1. Interacts with RIT2/RIN. May form homodimers (via Sema domain). In terms of tissue distribution, expression detected in Purkinje and granular cells in cerebellum, and in brain neocortex but not in corpus callosum. Expressed in glioma cells and embryonic kidney cells (at protein level). Expressed in brain, liver, pancreas and placenta, with weak expression detected also in lung and kidney. Expressed in several glioma cell lines.

The protein localises to the cell membrane. Receptor for SEMA5A that plays a role in axon guidance, invasive growth and cell migration. Stimulates neurite outgrowth and mediates Ca(2+)/Mg(2+)-dependent cell aggregation. In glioma cells, SEMA5A stimulation of PLXNB3 results in the disassembly of F-actin stress fibers, disruption of focal adhesions and cellular collapse as well as inhibition of cell migration and invasion through ARHGDIA-mediated inactivation of RAC1. In Homo sapiens (Human), this protein is Plexin-B3 (PLXNB3).